The sequence spans 414 residues: CinA-like protein (414 aa).

It belongs to the CinA family.

This is CinA-like protein from Geobacter sp. (strain M21).